Reading from the N-terminus, the 82-residue chain is uncharacterized protein (82 aa).

This is an uncharacterized protein from Bacillus subtilis (strain 168).